We begin with the raw amino-acid sequence, 419 residues long: Phospholipase A1-IIgamma (419 aa).

2 coiled-coil regions span residues 1-21 (MKRK…EFAK) and 207-227 (NARD…KDEE). Catalysis depends on serine 236, which acts as the Acyl-ester intermediate. Catalysis depends on charge relay system residues serine 236, aspartate 302, and histidine 339.

The protein belongs to the AB hydrolase superfamily. Lipase family. As to expression, expressed in seedlings, stems and siliques, and, to a lower extent, in flowers.

The protein resides in the cytoplasm. In terms of biological role, acylhydrolase that catalyzes the hydrolysis of 1,3-diacylglycerol (1,3-DAG) and 1-monoacylglycerol (1-MAG) at the sn-1 position. High activity toward 1,3-DAG and 1-MAG, but low activity toward 1,2-diacylglycerol (1,2-DAG) and 1-lysophosphatidylcholine (1-LPC), and no activity toward phosphatidylcholine (PC), monogalactosyldiacylglycerol (MGDG), digalactosyldiacylglycerol (DGDG), triacylglycerol (TAG) and 2-monoacylglycerol (2-MAG). May be involved in the negative regulation of seedling establishment by inhibiting the breakdown, beta-oxidation and mobilization of seed storage oils. This chain is Phospholipase A1-IIgamma (DSEL), found in Arabidopsis thaliana (Mouse-ear cress).